The sequence spans 816 residues: Protein kinase C-binding protein NELL2 (816 aa).

Residues 1-21 form the signal peptide; it reads MESRVLLRTFCLIFGLGAVWG. 4 N-linked (GlcNAc...) asparagine glycosylation sites follow: N53, N225, N293, and N298. Residues 64–228 enclose the Laminin G-like domain; sequence PRSVKASTAT…AQCPDLNRTC (165 aa). Residues 272–331 enclose the VWFC 1 domain; it reads RTCTMKGTTYREFESWIDGCKNCTCLNGTIQCETLICPNPDCPLNSALAYVDGKCCKECK. In terms of domain architecture, EGF-like 1 spans 397–439; the sequence is GYDFCSERHNCMENSVCRNLNDRAVCSCRDGFRALREDNAYCE. 3 cysteine pairs are disulfide-bonded: C401/C413, C407/C422, and C424/C438. Residues D440, I441, and E443 each coordinate Ca(2+). Residues 440–481 enclose the EGF-like 2; calcium-binding domain; it reads DIDECAEGRHYCRENTMCVNTPGSFMCICKTGYIRIDDYSCT. 9 cysteine pairs are disulfide-bonded: C444–C457, C451–C466, C468–C480, C486–C499, C493–C508, C510–C521, C525–C535, C529–C541, and C543–C552. Residues N459, T460, and S463 each coordinate Ca(2+). The 41-residue stretch at 482-522 folds into the EGF-like 3; calcium-binding domain; that stretch reads EHDECITNQHNCDENALCFNTVGGHNCVCKPGYTGNGTTCK. N517 is a glycosylation site (N-linked (GlcNAc...) asparagine). The 31-residue stretch at 523 to 553 folds into the EGF-like 4 domain; the sequence is AFCKDGCRNGGACIAANVCACPQGFTGPSCE. O-linked (GlcNAc...) threonine glycosylation occurs at T548. Positions 555, 556, and 558 each coordinate Ca(2+). One can recognise an EGF-like 5; calcium-binding domain in the interval 555–601; the sequence is DIDECSDGFVQCDSRANCINLPGWYHCECRDGYHDNGMFSPSGESCE. 3 cysteine pairs are disulfide-bonded: C559–C572, C566–C581, and C583–C600. Ca(2+) contacts are provided by N574, L575, and W578. Ca(2+) is bound by residues D602, I603, and E605. The 36-residue stretch at 602-637 folds into the EGF-like 6; calcium-binding domain; it reads DIDECGTGRHSCANDTICFNLDGGYDCRCPHGKNCT. Intrachain disulfides connect C606–C619, C613–C628, and C630–C636. N-linked (GlcNAc...) asparagine glycosylation is present at N615. Positions 621, 622, and 625 each coordinate Ca(2+). N635 is a glycosylation site (N-linked (GlcNAc...) asparagine). 2 consecutive VWFC domains span residues 638–693 and 698–756; these read GDCI…PECD and SQCL…PRCV.

Homotrimer. Binds to PRKCB. Interacts with NICOL1; this interaction triggers epididymal differentiation.

The protein localises to the secreted. Plays multiple roles in neural tissues, regulates neuronal proliferation, survival, differentiation, polarization, as well as axon guidance and synaptic functions. Plays an important role in axon development during neuronal differentiation through the MAPK intracellular signaling pathway. Via binding to its receptor ROBO3, plays a role in axon guidance, functions as a repulsive guidance cue for commissural axons, helping to steer them across the spinal cord midline. Required for neuron survival through the modulation of MAPK signaling pathways too. Involved in the regulation of hypothalamic GNRH secretion and the control of puberty. Functionally, testicular luminal protein that signals through a ROS1-pathway to regulate the epididymal initial segment (IS) maturation, sperm maturation and male fertility. This Pongo abelii (Sumatran orangutan) protein is Protein kinase C-binding protein NELL2 (NELL2).